Consider the following 184-residue polypeptide: GTP cyclohydrolase 1 (184 aa).

Zn(2+)-binding residues include Cys-75, His-78, and Cys-146.

Belongs to the GTP cyclohydrolase I family. As to quaternary structure, toroid-shaped homodecamer, composed of two pentamers of five dimers.

It catalyses the reaction GTP + H2O = 7,8-dihydroneopterin 3'-triphosphate + formate + H(+). The protein operates within cofactor biosynthesis; 7,8-dihydroneopterin triphosphate biosynthesis; 7,8-dihydroneopterin triphosphate from GTP: step 1/1. The chain is GTP cyclohydrolase 1 from Streptococcus pneumoniae serotype 2 (strain D39 / NCTC 7466).